The chain runs to 290 residues: Ribosomal RNA small subunit methyltransferase H (290 aa).

Residues 35 to 37 (GGH), aspartate 54, phenylalanine 81, aspartate 97, and glutamine 104 each bind S-adenosyl-L-methionine.

This sequence belongs to the methyltransferase superfamily. RsmH family.

The protein localises to the cytoplasm. The catalysed reaction is cytidine(1402) in 16S rRNA + S-adenosyl-L-methionine = N(4)-methylcytidine(1402) in 16S rRNA + S-adenosyl-L-homocysteine + H(+). Specifically methylates the N4 position of cytidine in position 1402 (C1402) of 16S rRNA. The chain is Ribosomal RNA small subunit methyltransferase H from Picosynechococcus sp. (strain ATCC 27264 / PCC 7002 / PR-6) (Agmenellum quadruplicatum).